We begin with the raw amino-acid sequence, 266 residues long: Non-structural maintenance of chromosomes element 1 homolog (266 aa).

The interaction with NSMCE3 stretch occupies residues 1 to 102; that stretch reads MQGSTRRAGA…SVSKMATDFA (102 aa). The segment at 191 to 232 adopts an RING-type; atypical zinc-finger fold; the sequence is CNICHGLLIQGQSCETCGIRMHLPCVAKYFQSIPEPHCPHCN. The disordered stretch occupies residues 246-266; sequence EKEREAGISKSSRKSLRTRQH. A compositionally biased stretch (basic residues) spans 256–266; the sequence is SSRKSLRTRQH.

The protein belongs to the NSE1 family. Component of the SMC5-SMC6 complex which consists at least of SMC5, SMC6, NSMCE2, NSMCE1, NSMCE4A or EID3 and NSMCE3. NSMCE1, NSMCE4A or EID3 and NSMCE3 probably form a subcomplex that bridges the head domains of the SMC5-SMC6 heterodimer. Interacts with NSMCE3. Ubiquitinated.

The protein localises to the nucleus. Its subcellular location is the chromosome. It is found in the telomere. The catalysed reaction is S-ubiquitinyl-[E2 ubiquitin-conjugating enzyme]-L-cysteine + [acceptor protein]-L-lysine = [E2 ubiquitin-conjugating enzyme]-L-cysteine + N(6)-ubiquitinyl-[acceptor protein]-L-lysine.. RING-type zinc finger-containing E3 ubiquitin ligase that assembles with melanoma antigen protein (MAGE) to catalyze the direct transfer of ubiquitin from E2 ubiquitin-conjugating enzyme to a specific substrate. Within MAGE-RING ubiquitin ligase complex, MAGE stimulates and specifies ubiquitin ligase activity likely through recruitment and/or stabilization of the E2 ubiquitin-conjugating enzyme at the E3:substrate complex. Involved in maintenance of genome integrity, DNA damage response and DNA repair. NSMCE3/MAGEG1 and NSMCE1 ubiquitin ligase are components of SMC5-SMC6 complex and may positively regulate homologous recombination-mediated DNA repair. The sequence is that of Non-structural maintenance of chromosomes element 1 homolog (Nsmce1) from Mus musculus (Mouse).